The sequence spans 41 residues: Large ribosomal subunit protein bL36B (41 aa).

The protein belongs to the bacterial ribosomal protein bL36 family.

The sequence is that of Large ribosomal subunit protein bL36B from Neisseria meningitidis serogroup B (strain ATCC BAA-335 / MC58).